Here is a 1406-residue protein sequence, read N- to C-terminus: Inactive tyrosine-protein kinase PRAG1 (1406 aa).

The residue at position 148 (Ser-148) is a Phosphoserine. Positions Glu-184 to Pro-193 are enriched in basic and acidic residues. 2 disordered regions span residues Glu-184–Glu-205 and Thr-217–Ser-248. Phosphotyrosine is present on residues Tyr-253, Tyr-365, and Tyr-413. Disordered stretches follow at residues Pro-372 to Val-470 and Asp-484 to Thr-854. Basic and acidic residues predominate over residues Arg-526–Pro-542. The segment covering Pro-546–Gly-576 has biased composition (low complexity). Composition is skewed to polar residues over residues Asn-660 to Trp-671 and Asp-678 to Ala-695. Residues Ser-696 and Ser-745 each carry the phosphoserine modification. 2 stretches are compositionally biased toward polar residues: residues Ser-737–Pro-746 and Ser-754–Cys-770. Ser-782 carries the post-translational modification Phosphoserine. Polar residues predominate over residues Ser-798–Gly-808. Position 826 is a phosphoserine (Ser-826). A required for homodimerization region spans residues Ser-933–Gly-976. A Protein kinase domain is found at Gln-978–Leu-1329. A compositionally biased stretch (pro residues) spans Gly-1163–Ala-1173. The disordered stretch occupies residues Gly-1163–Glu-1206. Residues Pro-1174–Glu-1202 show a composition bias toward low complexity. The required for homodimerization stretch occupies residues Gly-1331–Leu-1406.

Belongs to the protein kinase superfamily. In terms of assembly, homodimer. Dimerization leads to the catalytic activation of CSK. Interacts (via C-terminus) with RND2. Interacts with CSK (via SH2 domain) in a Tyr-413 phosphorylation-dependent manner; this interaction potentiates kinase activity of CSK. Interacts with PEAK1. Interacts with NOTCH1 intracellular domain (N1ICD). Forms a complex with N1ICD and MAML1, in a MAML1-dependent manner. In terms of processing, phosphorylated by CSK on Tyr-253, Tyr-365, and Tyr-413; Tyr-413 is a primary site of phosphorylation.

The protein localises to the cytoplasm. The protein resides in the cell junction. It is found in the focal adhesion. It localises to the nucleus. In terms of biological role, catalytically inactive protein kinase that acts as a scaffold protein. Functions as an effector of the small GTPase RND2, which stimulates RhoA activity and inhibits NGF-induced neurite outgrowth. Promotes Src family kinase (SFK) signaling by regulating the subcellular localization of CSK, a negative regulator of these kinases, leading to the regulation of cell morphology and motility by a CSK-dependent mechanism. Acts as a critical coactivator of Notch signaling. The protein is Inactive tyrosine-protein kinase PRAG1 of Homo sapiens (Human).